The primary structure comprises 115 residues: Large ribosomal subunit protein bL20c (115 aa).

The protein belongs to the bacterial ribosomal protein bL20 family.

It is found in the plastid. The protein resides in the chloroplast. In terms of biological role, binds directly to 23S ribosomal RNA and is necessary for the in vitro assembly process of the 50S ribosomal subunit. It is not involved in the protein synthesizing functions of that subunit. This is Large ribosomal subunit protein bL20c from Gnetum parvifolium (Small-leaved jointfir).